Reading from the N-terminus, the 268-residue chain is Thiazole synthase (268 aa).

Lys-96 functions as the Schiff-base intermediate with DXP in the catalytic mechanism. 1-deoxy-D-xylulose 5-phosphate contacts are provided by residues Gly-157, 185-186 (AG), and 207-208 (NT). The interval 238–268 (PMRPREAASPSSPVEGVPFTPTGPRPGRGPQ) is disordered. Over residues 258–268 (PTGPRPGRGPQ) the composition is skewed to pro residues.

The protein belongs to the ThiG family. As to quaternary structure, homotetramer. Forms heterodimers with either ThiH or ThiS.

The protein localises to the cytoplasm. The enzyme catalyses [ThiS sulfur-carrier protein]-C-terminal-Gly-aminoethanethioate + 2-iminoacetate + 1-deoxy-D-xylulose 5-phosphate = [ThiS sulfur-carrier protein]-C-terminal Gly-Gly + 2-[(2R,5Z)-2-carboxy-4-methylthiazol-5(2H)-ylidene]ethyl phosphate + 2 H2O + H(+). The protein operates within cofactor biosynthesis; thiamine diphosphate biosynthesis. Its function is as follows. Catalyzes the rearrangement of 1-deoxy-D-xylulose 5-phosphate (DXP) to produce the thiazole phosphate moiety of thiamine. Sulfur is provided by the thiocarboxylate moiety of the carrier protein ThiS. In vitro, sulfur can be provided by H(2)S. The chain is Thiazole synthase from Thermus thermophilus (strain ATCC 27634 / DSM 579 / HB8).